Here is a 236-residue protein sequence, read N- to C-terminus: Transcriptional regulatory protein RprY (236 aa).

The Response regulatory domain occupies 9–123; it reads RILLCEDDEN…ELTFRIEAIL (115 aa). At aspartate 58 the chain carries 4-aspartylphosphate. The segment at residues 134–231 is a DNA-binding region (ompR/PhoB-type); sequence SNVYKIGKFT…IHGKGYKLIT (98 aa).

Phosphorylated by RprX.

Its subcellular location is the cytoplasm. Functionally, member of the two-component regulatory system RprX/RprY. The polypeptide is Transcriptional regulatory protein RprY (rprY) (Bacteroides fragilis (strain YCH46)).